The sequence spans 319 residues: Beta-ketoacyl-[acyl-carrier-protein] synthase III (319 aa).

Active-site residues include Cys113 and His246. The tract at residues 247–251 (QANIR) is ACP-binding. Residue Asn276 is part of the active site.

Belongs to the thiolase-like superfamily. FabH family. In terms of assembly, homodimer.

It is found in the cytoplasm. The catalysed reaction is malonyl-[ACP] + acetyl-CoA + H(+) = 3-oxobutanoyl-[ACP] + CO2 + CoA. It functions in the pathway lipid metabolism; fatty acid biosynthesis. Functionally, catalyzes the condensation reaction of fatty acid synthesis by the addition to an acyl acceptor of two carbons from malonyl-ACP. Catalyzes the first condensation reaction which initiates fatty acid synthesis and may therefore play a role in governing the total rate of fatty acid production. Possesses both acetoacetyl-ACP synthase and acetyl transacylase activities. Its substrate specificity determines the biosynthesis of branched-chain and/or straight-chain of fatty acids. The sequence is that of Beta-ketoacyl-[acyl-carrier-protein] synthase III from Ehrlichia ruminantium (strain Welgevonden).